Consider the following 679-residue polypeptide: Glycine--tRNA ligase beta subunit (679 aa).

The protein belongs to the class-II aminoacyl-tRNA synthetase family. Tetramer of two alpha and two beta subunits.

Its subcellular location is the cytoplasm. It catalyses the reaction tRNA(Gly) + glycine + ATP = glycyl-tRNA(Gly) + AMP + diphosphate. The protein is Glycine--tRNA ligase beta subunit (glyS) of Bacillus subtilis (strain 168).